Reading from the N-terminus, the 215-residue chain is 2-dehydro-3-deoxy-phosphogluconate aldolase (215 aa).

Glu-46 acts as the Proton acceptor in catalysis. Pyruvate is bound by residues Arg-50, Thr-74, and Lys-134. Lys-134 (schiff-base intermediate with substrate) is an active-site residue.

This sequence belongs to the KHG/KDPG aldolase family. As to quaternary structure, homotrimer.

It carries out the reaction 2-dehydro-3-deoxy-6-phospho-D-gluconate = D-glyceraldehyde 3-phosphate + pyruvate. The protein operates within carbohydrate acid metabolism; 2-dehydro-3-deoxy-D-gluconate degradation; D-glyceraldehyde 3-phosphate and pyruvate from 2-dehydro-3-deoxy-D-gluconate: step 2/2. Its function is as follows. Involved in the degradation of glucose via the Entner-Doudoroff pathway. Catalyzes the reversible, stereospecific retro-aldol cleavage of 2-keto-3-deoxy-6-phosphogluconate (KDPG) to pyruvate and D-glyceraldehyde-3-phosphate. Involved in the degradation of 3,6-anhydro-L-galactose (L-AnG), which is the major monomeric sugar of red macroalgae. The cleavage of KDPG to glyceraldehyde 3-phosphate and pyruvate is the sixth step of this pathway. In Pseudoalteromonas atlantica (strain T6c / ATCC BAA-1087), this protein is 2-dehydro-3-deoxy-phosphogluconate aldolase.